The sequence spans 70 residues: MKAIIFFCFLSVMVFIVAEASSLEALKIFEGERDCVGENGRCRDWYNDCCDGFYCSCRQPPYCICRNNNG.

The first 20 residues, 1-20 (MKAIIFFCFLSVMVFIVAEA), serve as a signal peptide directing secretion. Residues 21–33 (SSLEALKIFEGER) constitute a propeptide that is removed on maturation. Disulfide bonds link C35-C50, C42-C55, C49-C65, and C57-C63. Position 69 is an asparagine amide (N69).

It belongs to the neurotoxin 07 (Beta/delta-agtx) family. 04 (aga-5) subfamily. In terms of tissue distribution, expressed by the venom gland.

The protein resides in the secreted. Insecticidal neurotoxin that modulates the insect Nav channel (DmNaV1/tipE (para/tipE)) in a unique manner, with both the activation and inactivation processes being affected. The voltage dependence of activation is shifted toward more hyperpolarized potentials (analogous to site 4 toxins) and a non-inactivating persistent sodium current is induced (site 3-like action). Interestingly, both effects take place in a voltage-dependent manner, producing a bell-shaped curve between -80 and 0 mV. This chain is Mu-agatoxin-Ao1a, found in Agelena orientalis (Funnel-web spider).